A 602-amino-acid polypeptide reads, in one-letter code: Elongation factor 4 (602 aa).

The tr-type G domain occupies 2 to 184 (NHIRNFSIIA…LIVAKVPAPR (183 aa)). GTP contacts are provided by residues 14-19 (DHGKST) and 131-134 (NKMD).

The protein belongs to the TRAFAC class translation factor GTPase superfamily. Classic translation factor GTPase family. LepA subfamily.

The protein resides in the cell inner membrane. It catalyses the reaction GTP + H2O = GDP + phosphate + H(+). Its function is as follows. Required for accurate and efficient protein synthesis under certain stress conditions. May act as a fidelity factor of the translation reaction, by catalyzing a one-codon backward translocation of tRNAs on improperly translocated ribosomes. Back-translocation proceeds from a post-translocation (POST) complex to a pre-translocation (PRE) complex, thus giving elongation factor G a second chance to translocate the tRNAs correctly. Binds to ribosomes in a GTP-dependent manner. The protein is Elongation factor 4 of Paracidovorax citrulli (strain AAC00-1) (Acidovorax citrulli).